The primary structure comprises 355 residues: MNQVRKWNIIGGRVIKTGIAVFLTVLVCEFFNIPTIFAVITAIVTIEPTATDSIKKGLVRFPASTIGSAYAMTFTFFLGHQALSYALAAMFTIVTCQKLRLHAGTLVATLTAVAMIPITADHYFTAFLIRLATTSTGIIVSTVVNFFILPPHYVKTISGCTEELFVKTANVMEEWLTALMDGKVIKKETTYNLSKLTVLLHKAVQFVQYEQKDWKYHRHTKKEMRSFLLVQKQLHLLQQIIYHIDNLARAPIETCDWSQNEKEILRRTIHSIISILRNHCEKIDEEHFKLIDELDKQFWTNKNDLAHCKPNQYHHHFSSESIILFEILSIHDMLEELKQIFEKYESENQLNCSVY.

4 helical membrane passes run Ile-19–Val-39, Phe-74–Val-94, Thr-109–Ile-129, and Leu-131–Pro-151.

This sequence belongs to the UPF0421 family.

It localises to the cell membrane. This Bacillus cereus (strain ZK / E33L) protein is UPF0421 protein BCE33L2478.